Consider the following 327-residue polypeptide: Vacuolar protein sorting-associated protein 26A (327 aa).

The disordered stretch occupies residues 305 to 327 (RNFHQRYESPEPRPSLSAEQPEM).

This sequence belongs to the VPS26 family. In terms of assembly, component of the heterotrimeric retromer cargo-selective complex (CSC) which is believed to associate with variable sorting nexins to form functionally distinct retromer complex variants.

It localises to the cytoplasm. It is found in the endosome membrane. The protein localises to the early endosome. Acts as a component of the retromer cargo-selective complex (CSC). The CSC is believed to be the core functional component of retromer or respective retromer complex variants acting to prevent missorting of selected transmembrane cargo proteins into the lysosomal degradation pathway. Retromer mediates retrograde transport of cargo proteins from endosomes to the trans-Golgi network (TGN). This is Vacuolar protein sorting-associated protein 26A (vps26a) from Danio rerio (Zebrafish).